The chain runs to 312 residues: Acetyl-coenzyme A carboxylase carboxyl transferase subunit alpha (312 aa).

The CoA carboxyltransferase C-terminal domain maps to 36-286 (RLDKEVKSIY…KEYFLDALRT (251 aa)).

Belongs to the AccA family. As to quaternary structure, acetyl-CoA carboxylase is a heterohexamer composed of biotin carboxyl carrier protein (AccB), biotin carboxylase (AccC) and two subunits each of ACCase subunit alpha (AccA) and ACCase subunit beta (AccD).

The protein resides in the cytoplasm. It catalyses the reaction N(6)-carboxybiotinyl-L-lysyl-[protein] + acetyl-CoA = N(6)-biotinyl-L-lysyl-[protein] + malonyl-CoA. It participates in lipid metabolism; malonyl-CoA biosynthesis; malonyl-CoA from acetyl-CoA: step 1/1. In terms of biological role, component of the acetyl coenzyme A carboxylase (ACC) complex. First, biotin carboxylase catalyzes the carboxylation of biotin on its carrier protein (BCCP) and then the CO(2) group is transferred by the carboxyltransferase to acetyl-CoA to form malonyl-CoA. The polypeptide is Acetyl-coenzyme A carboxylase carboxyl transferase subunit alpha (Helicobacter pylori (strain HPAG1)).